The following is a 519-amino-acid chain: 3-octaprenyl-4-hydroxybenzoate carboxy-lyase (519 aa).

Residue Asn-177 participates in Mn(2+) binding. Prenylated FMN contacts are provided by residues 180-182 (IYR), 194-196 (RWL), and 199-200 (RG). Glu-243 serves as a coordination point for Mn(2+). The active-site Proton donor is the Asp-318.

The protein belongs to the UbiD family. As to quaternary structure, homohexamer. Prenylated FMN serves as cofactor. The cofactor is Mn(2+).

Its subcellular location is the cell membrane. The enzyme catalyses a 4-hydroxy-3-(all-trans-polyprenyl)benzoate + H(+) = a 2-(all-trans-polyprenyl)phenol + CO2. It functions in the pathway cofactor biosynthesis; ubiquinone biosynthesis. Catalyzes the decarboxylation of 3-octaprenyl-4-hydroxy benzoate to 2-octaprenylphenol, an intermediate step in ubiquinone biosynthesis. This is 3-octaprenyl-4-hydroxybenzoate carboxy-lyase from Burkholderia mallei (strain ATCC 23344).